A 161-amino-acid chain; its full sequence is Allophycocyanin subunit alpha-B (161 aa).

N4-methylasparagine is present on Asn-71. Residue Cys-81 participates in (2R,3E)-phycocyanobilin binding.

It belongs to the phycobiliprotein family. As to quaternary structure, heterohexamer of two alpha chains, one alpha-B chain and three beta chains. In terms of processing, contains one covalently linked phycocyanobilin chromophore. The chromophore is added by phycocyanobilin lyase CpcS 1.

The protein localises to the cellular thylakoid membrane. In terms of biological role, light-harvesting photosynthetic bile pigment-protein from the phycobiliprotein complex. Allophycocyanin has a maximum absorption at approximately 654 nanometers. This chain is Allophycocyanin subunit alpha-B (apcD), found in Nostoc sp. (strain PCC 7120 / SAG 25.82 / UTEX 2576).